The chain runs to 129 residues: Small ribosomal subunit protein uS12 (129 aa).

Asp89 carries the post-translational modification 3-methylthioaspartic acid. The disordered stretch occupies residues 110-129; the sequence is RKQGRSRYGAPRKQVVATKK.

The protein belongs to the universal ribosomal protein uS12 family. Part of the 30S ribosomal subunit. Contacts proteins S8 and S17. May interact with IF1 in the 30S initiation complex.

With S4 and S5 plays an important role in translational accuracy. In terms of biological role, interacts with and stabilizes bases of the 16S rRNA that are involved in tRNA selection in the A site and with the mRNA backbone. Located at the interface of the 30S and 50S subunits, it traverses the body of the 30S subunit contacting proteins on the other side and probably holding the rRNA structure together. The combined cluster of proteins S8, S12 and S17 appears to hold together the shoulder and platform of the 30S subunit. The chain is Small ribosomal subunit protein uS12 from Rickettsia bellii (strain OSU 85-389).